Here is a 365-residue protein sequence, read N- to C-terminus: Glycolaldehyde reductase (365 aa).

8 residues coordinate NAD(+): D37, G94, K95, T116, S119, S125, L127, and Y131. Zn(2+)-binding residues include D171, H254, and H271.

It belongs to the iron-containing alcohol dehydrogenase family. The cofactor is Zn(2+).

The enzyme catalyses ethylene glycol + NAD(+) = glycolaldehyde + NADH + H(+). With respect to regulation, is subject to substrate inhibition. Functionally, oxidoreductase involved in the non-carboxylating pentose bisphosphate pathway, a nucleoside degradation pathway present in some halophilic archaea. Catalyzes the reduction of glycolaldehyde to ethylene glycol. Cannot catalyze the oxidation of glycerol 1-phosphate nor the reduction of dihydroxyacetone phosphate (DHAP). This Halobacterium salinarum (strain ATCC 700922 / JCM 11081 / NRC-1) (Halobacterium halobium) protein is Glycolaldehyde reductase.